The chain runs to 309 residues: MNEFYQKDIISIKDFSKDQLEQIFQSTDKIISLDPIDRREICKGKTLGYLFYEPSTRTRLSFEAAMASIGGNSLGISDITSSSTQKGESLADTVRIISIYSDAMVLRHPLDGSSRFAAEVSDKPVINAGSGTEEHPTQAIQDLYTIKKEKKKIDRLKIGIVGDLKYGRTVYSLLHGLGNYDVDVRLISPESLRIRSDSTYEIKQKLDYTESTNIEDHIDELDVLYVTRIQKERFPDEEEYLKVKGSYVVGLDLLKQMKDDSIILHPLPRIDEISTDVDKTKNAKYFEQAEYGKYTRAALLGLTLNENGF.

The carbamoyl phosphate site is built by Arg-57 and Thr-58. Lys-86 contributes to the L-aspartate binding site. Carbamoyl phosphate contacts are provided by Arg-107, His-135, and Gln-138. Residues Arg-168 and Arg-228 each contribute to the L-aspartate site. Carbamoyl phosphate contacts are provided by Leu-267 and Pro-268.

Belongs to the aspartate/ornithine carbamoyltransferase superfamily. ATCase family. Heterooligomer of catalytic and regulatory chains.

It catalyses the reaction carbamoyl phosphate + L-aspartate = N-carbamoyl-L-aspartate + phosphate + H(+). It participates in pyrimidine metabolism; UMP biosynthesis via de novo pathway; (S)-dihydroorotate from bicarbonate: step 2/3. Functionally, catalyzes the condensation of carbamoyl phosphate and aspartate to form carbamoyl aspartate and inorganic phosphate, the committed step in the de novo pyrimidine nucleotide biosynthesis pathway. This Nitrosopumilus maritimus (strain SCM1) protein is Aspartate carbamoyltransferase catalytic subunit.